We begin with the raw amino-acid sequence, 344 residues long: MMVIRPVERTDVSALMQLASKTGGGLTSLPANEATLSARIERAIKTWQGELPKSEQGYVFVLEDSETGTVAGICAIEVAVGLNDPWYNYRVGTLVHASKELNVYNALPTLFLSNDHTGSSELCTLFLDPDWRKEGNGYLLSKSRFMFMAAFRDKFNDKVVAEMRGVIDEHGYSPFWQSLGKRFFSMDFSRADFLCGTGQKAFIAELMPKHPIYTHFLSQEAQDVIGQVHPQTAPARAVLEKEGFRYRNYIDIFDGGPTLECDIDRVRAIRKSRLVEVAEGQPAQGEFPACLVANENYHHFRVVLVRTDPATERLILTAAQLDALKCHAGDRVRLVRLCAEEKTA.

Residue Leu-125 coordinates succinyl-CoA. The active-site Proton donor is His-229.

This sequence belongs to the arginine N-succinyltransferase family.

The enzyme catalyses succinyl-CoA + L-arginine = N(2)-succinyl-L-arginine + CoA + H(+). It participates in amino-acid degradation; L-arginine degradation via AST pathway; L-glutamate and succinate from L-arginine: step 1/5. Catalyzes the transfer of succinyl-CoA to arginine to produce N(2)-succinylarginine. This Escherichia fergusonii (strain ATCC 35469 / DSM 13698 / CCUG 18766 / IAM 14443 / JCM 21226 / LMG 7866 / NBRC 102419 / NCTC 12128 / CDC 0568-73) protein is Arginine N-succinyltransferase.